The primary structure comprises 331 residues: N-acetyl-alpha-D-glucosaminyl-diphospho-ditrans,octacis-undecaprenol 4-epimerase (331 aa).

NAD(+)-binding positions include 13-14 (FV), 34-39 (QQSHFY), 47-48 (DV), S109, Y132, and K136. The substrate site is built by S109 and Y132. Y132 functions as the Proton acceptor in the catalytic mechanism. Residues 183–184 (GK) and 199–201 (YVG) contribute to the substrate site.

It belongs to the NAD(P)-dependent epimerase/dehydratase family. It depends on NAD(+) as a cofactor.

Its subcellular location is the cell membrane. It carries out the reaction N-acetyl-alpha-D-glucosaminyl-di-trans,octa-cis-undecaprenyl diphosphate = N-acetyl-alpha-D-galactosaminyl-di-trans,octa-cis-undecaprenyl diphosphate. It participates in bacterial outer membrane biogenesis; LPS O-antigen biosynthesis. Functionally, involved in biosynthesis of the repeating tetrasaccharide unit of the O-antigen. Catalyzes the reversible epimerization of the hydroxyl group at position C4 of undecaprenyl pyrophosphate-N-acetylglucosamine (UndPP-GlcNAc) to yield undecaprenyl pyrophosphate-N-acetylgalactosamine (UndPP-GalNAc). In Escherichia coli O157:H7, this protein is N-acetyl-alpha-D-glucosaminyl-diphospho-ditrans,octacis-undecaprenol 4-epimerase.